Reading from the N-terminus, the 293-residue chain is Indole-3-glycerol phosphate synthase (293 aa).

It belongs to the TrpC family.

It catalyses the reaction 1-(2-carboxyphenylamino)-1-deoxy-D-ribulose 5-phosphate + H(+) = (1S,2R)-1-C-(indol-3-yl)glycerol 3-phosphate + CO2 + H2O. It functions in the pathway amino-acid biosynthesis; L-tryptophan biosynthesis; L-tryptophan from chorismate: step 4/5. The polypeptide is Indole-3-glycerol phosphate synthase (Rippkaea orientalis (strain PCC 8801 / RF-1) (Cyanothece sp. (strain PCC 8801))).